The chain runs to 1020 residues: X-linked retinitis pigmentosa GTPase regulator (1020 aa).

RCC1 repeat units lie at residues 54–105, 106–158, 159–208, 209–261, 262–313, and 314–367; these read NKLY…STEG, GNVY…LTED, GRLF…VTTD, GELY…LTEN, AVYT…ITDI, and GLMY…FAAP. Serine 418 and serine 518 each carry phosphoserine. Disordered regions lie at residues 609–776, 790–906, and 989–1020; these read HENN…IISK, EIPE…KEKA, and DNKD…CTIL. Basic and acidic residues-rich tracts occupy residues 618 to 636, 644 to 665, 685 to 698, 704 to 715, 760 to 771, 790 to 802, 816 to 853, and 883 to 906; these read LDAK…QKES, EKET…EKST, EENK…ESCK, DSERESVEKPDS, KLIEQGNEKETK, EIPE…EDSK, ENVK…LKLE, and SKTE…KEKA. Residues 996–1009 show a composition bias toward polar residues; that stretch reads NHMSQNHQNIPPTN. Residue cysteine 1017 is modified to Cysteine methyl ester. Cysteine 1017 carries S-geranylgeranyl cysteine lipidation. Residues 1018 to 1020 constitute a propeptide, removed in mature form; the sequence is TIL.

As to quaternary structure, interacts with SPATA7. Interacts with CEP290. Interacts with WHRN. Interacts with PDE6D. Interacts with RPGRIP1. Interacts with RPGRIP1L. PDE6D, RPGRIP1 and RPGRIP1L may compete for the same binding sites. Interacts with RAB37 and RAB8A (in GDP-bound forms); functions as GEF for RAB37 and RAB8A. Isoform 6 interacts with NPM1 (via C-terminus). Isoform 6 interacts with SMC1A and SMC3. Prenylated. In terms of tissue distribution, heart, brain, placenta, lung, liver, muscle, kidney, retina, pancreas and fetal retinal pigment epithelium. Isoform 3 is found only in the retina. Colocalizes with RPGRIP1 in the outer segment of rod photoreceptors and cone outer segments.

Its subcellular location is the cytoplasm. It is found in the cytoskeleton. It localises to the flagellum axoneme. The protein localises to the golgi apparatus. The protein resides in the cell projection. Its subcellular location is the cilium. It is found in the microtubule organizing center. It localises to the centrosome. The protein localises to the cilium basal body. The protein resides in the cilium axoneme. Its function is as follows. Acts as a guanine-nucleotide releasing factor (GEF) for RAB8A and RAB37 by promoting the conversion of inactive RAB-GDP to the active form RAB-GTP. GEF activity towards RAB8A may facilitate ciliary trafficking by modulating ciliary intracellular localization of RAB8A. GEF activity towards RAB37 maintains autophagic homeostasis and retinal function. Involved in photoreceptor integrity. May control cilia formation by regulating actin stress filaments and cell contractility. May be involved in microtubule organization and regulation of transport in primary cilia. May play a critical role in spermatogenesis and in intraflagellar transport processes. This chain is X-linked retinitis pigmentosa GTPase regulator, found in Homo sapiens (Human).